Reading from the N-terminus, the 310-residue chain is Proline iminopeptidase (310 aa).

In terms of domain architecture, AB hydrolase-1 spans 33–290 (PVIFLHGGPG…RVVQAGHCAF (258 aa)). Serine 107 serves as the catalytic Nucleophile. The active site involves aspartate 260. Residue histidine 287 is the Proton donor of the active site.

It belongs to the peptidase S33 family.

It localises to the cytoplasm. It catalyses the reaction Release of N-terminal proline from a peptide.. Functionally, hydrolyzes peptides having the structure Pro-Y-Z to yield free proline. Also hydrolyzes the dipeptide Pro-Gly. The chain is Proline iminopeptidase (pip) from Neisseria gonorrhoeae.